A 189-amino-acid chain; its full sequence is Ribosome maturation factor RimM (189 aa).

A PRC barrel domain is found at 118–189 (SGEYYWDDLI…IILVDWDENF (72 aa)).

The protein belongs to the RimM family. As to quaternary structure, binds ribosomal protein uS19.

It is found in the cytoplasm. An accessory protein needed during the final step in the assembly of 30S ribosomal subunit, possibly for assembly of the head region. Essential for efficient processing of 16S rRNA. May be needed both before and after RbfA during the maturation of 16S rRNA. It has affinity for free ribosomal 30S subunits but not for 70S ribosomes. This Ruthia magnifica subsp. Calyptogena magnifica protein is Ribosome maturation factor RimM.